Reading from the N-terminus, the 89-residue chain is Small ribosomal subunit protein uS15 (89 aa).

This sequence belongs to the universal ribosomal protein uS15 family. As to quaternary structure, part of the 30S ribosomal subunit. Forms a bridge to the 50S subunit in the 70S ribosome, contacting the 23S rRNA.

Its function is as follows. One of the primary rRNA binding proteins, it binds directly to 16S rRNA where it helps nucleate assembly of the platform of the 30S subunit by binding and bridging several RNA helices of the 16S rRNA. In terms of biological role, forms an intersubunit bridge (bridge B4) with the 23S rRNA of the 50S subunit in the ribosome. This Sodalis glossinidius (strain morsitans) protein is Small ribosomal subunit protein uS15.